We begin with the raw amino-acid sequence, 467 residues long: Cobyrinate a,c-diamide synthase (467 aa).

The GATase cobBQ-type domain occupies 256–449 (RVGYAADQAF…AHIHVEGAPE (194 aa)). Cys338 serves as the catalytic Nucleophile.

The protein belongs to the CobB/CbiA family. Mg(2+) serves as cofactor.

The enzyme catalyses cob(II)yrinate + 2 L-glutamine + 2 ATP + 2 H2O = cob(II)yrinate a,c diamide + 2 L-glutamate + 2 ADP + 2 phosphate + 2 H(+). Its pathway is cofactor biosynthesis; adenosylcobalamin biosynthesis; cob(II)yrinate a,c-diamide from sirohydrochlorin (anaerobic route): step 10/10. In terms of biological role, catalyzes the ATP-dependent amidation of the two carboxylate groups at positions a and c of cobyrinate, using either L-glutamine or ammonia as the nitrogen source. This is Cobyrinate a,c-diamide synthase from Magnetococcus marinus (strain ATCC BAA-1437 / JCM 17883 / MC-1).